A 459-amino-acid chain; its full sequence is Probable Delta(5) fatty acid desaturase C (459 aa).

Residues 9–87 (KKLYSWKEIS…LKQYEIGQVS (79 aa)) form the Cytochrome b5 heme-binding domain. The heme site is built by His-45 and His-68. 2 helical membrane-spanning segments follow: residues 121–141 (FAFG…TSYY) and 151–171 (FYLN…FSLH). The Histidine box-1 motif lies at 174-178 (HDACH). Residues 187–207 (VWKWLGATYDLFIGASFFYWC) form a helical membrane-spanning segment. Residues 210–215 (HVIGHH) carry the Histidine box-2 motif. Transmembrane regions (helical) follow at residues 289–309 (FEII…FIIP) and 315–335 (LVNL…YLSF). Positions 394–398 (QVVHH) match the Histidine box-3 motif.

It belongs to the fatty acid desaturase type 1 family. The cofactor is Fe cation.

Its subcellular location is the membrane. The chain is Probable Delta(5) fatty acid desaturase C from Dictyostelium discoideum (Social amoeba).